We begin with the raw amino-acid sequence, 786 residues long: Receptor-interacting serine/threonine-protein kinase 4 (786 aa).

A Protein kinase domain is found at 22 to 286 (FAGWEKVGSG…QEITSETEDL (265 aa)). Residues 28-36 (VGSGGFGQV) and lysine 51 contribute to the ATP site. Residue lysine 51 forms a Glycyl lysine isopeptide (Lys-Gly) (interchain with G-Cter in ubiquitin) linkage. The active-site Proton acceptor is aspartate 143. A Glycyl lysine isopeptide (Lys-Gly) (interchain with G-Cter in ubiquitin) cross-link involves residue lysine 145. Disordered regions lie at residues 293–328 (EVKD…APPF) and 347–378 (QTLE…GVSS). A compositionally biased stretch (basic and acidic residues) spans 295–319 (KDLAHEPGEKSSLESKSEARPESSR). Positions 357–378 (RSSSECKLPSSSSGKRLSGVSS) are enriched in low complexity. ANK repeat units follow at residues 439 to 468 (SSAS…NPNL), 472 to 501 (KGST…SVNA), 505 to 534 (DQWT…SVNE), 538 to 567 (EGRT…DVGL), 571 to 601 (DAWL…SVNA), 605 to 634 (DGRT…DVNI), 638 to 667 (QAQT…GKEA), 671 to 700 (EGYT…DVMA), 704 to 734 (LNQT…DLSD), and 736 to 765 (QGLS…HINL).

This sequence belongs to the protein kinase superfamily. TKL Ser/Thr protein kinase family. In terms of assembly, interacts with PRKCB. Interacts with TRAF1, TRAF2, TRAF3 and TRAF5. Interacts with BIRC2/c-IAP1, BIRC3/c-IAP2 and XIAP/BIRC4. Post-translationally, may be phosphorylated by MAP3K2 and MAP3K3. Proteolytically cleaved by during Fas-induced apoptosis. Cleavage at Asp-342 and Asp-380. In terms of processing, polyubiquitinated with 'Lys-48' and 'Lys-63'-linked chains by BIRC2/c-IAP1 and BIRC3/c-IAP2, leading to activation of NF-kappa-B. As to expression, expressed in the epidermis of the skin (at protein level). Ubiquitously expressed, with an abundant expression in the thymus, bone marrow, pro-B, pre-B and immature B cells and a weak expression in the spleen.

It localises to the cytoplasm. The protein resides in the membrane. It carries out the reaction L-seryl-[protein] + ATP = O-phospho-L-seryl-[protein] + ADP + H(+). The enzyme catalyses L-threonyl-[protein] + ATP = O-phospho-L-threonyl-[protein] + ADP + H(+). Serine/threonine protein kinase. Required for embryonic skin development and correct skin homeostasis in adults, via phosphorylation of PKP1 and subsequent promotion of keratinocyte differentiation and cell adhesion. It is a direct transcriptional target of TP63. Plays a role in NF-kappa-B activation. The sequence is that of Receptor-interacting serine/threonine-protein kinase 4 (Ripk4) from Mus musculus (Mouse).